The primary structure comprises 221 residues: DELTA-actitoxin-Ucs1a (221 aa).

The first 19 residues, 1 to 19 (MNRLIVLCLFVAMIYATIA), serve as a signal peptide directing secretion. A propeptide spanning residues 20 to 42 (LPKKEDISNDERSISVSKVPVKK) is cleaved from the precursor. The segment at 45–54 (AIAGAVIEGA) is plays an important role in the hemolytic activity. The segment at 53-72 (GAKLTFGILEKILTVLGDIN) is N-terminal region. Residues Ser-96, Val-129, Ser-147, Pro-149, Tyr-175, Tyr-179, and Tyr-180 each coordinate phosphocholine. The interval 147 to 162 (SVPYDYNLYSNWWNIK) is trp-rich region, which is important for the binding to lipid membrane. The Cell attachment site, crucial for protein stability motif lies at 186-188 (KGD).

The protein belongs to the actinoporin family. Sea anemone subfamily. In terms of assembly, octamer or nonamer in membranes. Monomer in the soluble state.

It is found in the secreted. It localises to the nematocyst. The protein resides in the target cell membrane. Functionally, pore-forming protein that forms cations-selective hydrophilic pores of around 1 nm and causes cytolysis. Pore formation is a multi-step process that involves specific recognition of membrane sphingomyelin (but neither cholesterol nor phosphatidylcholine) using aromatic rich region and adjacent phosphocholine (POC) binding site, firm binding to the membrane (mainly driven by hydrophobic interactions) accompanied by the transfer of the N-terminal region to the lipid-water interface and finally pore formation after oligomerization of monomers. This Urticina crassicornis (Mottled anemone) protein is DELTA-actitoxin-Ucs1a.